A 341-amino-acid chain; its full sequence is Biotin synthase (341 aa).

Positions 40 to 264 (NSVKLNYLVN…VAPRSELRIA (225 aa)) constitute a Radical SAM core domain. [4Fe-4S] cluster is bound by residues C55, C59, and C62. [2Fe-2S] cluster-binding residues include C99, C132, C192, and R262. The tract at residues 317–341 (ASAPQGGVEPVLRKRGAGTELQPNA) is disordered.

This sequence belongs to the radical SAM superfamily. Biotin synthase family. In terms of assembly, homodimer. The cofactor is [4Fe-4S] cluster. It depends on [2Fe-2S] cluster as a cofactor.

The enzyme catalyses (4R,5S)-dethiobiotin + (sulfur carrier)-SH + 2 reduced [2Fe-2S]-[ferredoxin] + 2 S-adenosyl-L-methionine = (sulfur carrier)-H + biotin + 2 5'-deoxyadenosine + 2 L-methionine + 2 oxidized [2Fe-2S]-[ferredoxin]. It participates in cofactor biosynthesis; biotin biosynthesis; biotin from 7,8-diaminononanoate: step 2/2. Catalyzes the conversion of dethiobiotin (DTB) to biotin by the insertion of a sulfur atom into dethiobiotin via a radical-based mechanism. The polypeptide is Biotin synthase (Renibacterium salmoninarum (strain ATCC 33209 / DSM 20767 / JCM 11484 / NBRC 15589 / NCIMB 2235)).